The primary structure comprises 69 residues: Sodium channel toxin (69 aa).

The LCN-type CS-alpha/beta domain maps to 2-66; sequence KNDYPVDTAK…SPTKTSGRCN (65 aa). 4 cysteine pairs are disulfide-bonded: C14–C65, C18–C41, C27–C48, and C31–C50.

This sequence belongs to the long (4 C-C) scorpion toxin superfamily. Sodium channel inhibitor family. Expressed by the venom gland.

It is found in the secreted. Its function is as follows. Inhibits voltage-gated sodium channels (Nav). This is Sodium channel toxin from Tityus metuendus (Scorpion).